Consider the following 274-residue polypeptide: Thiazole synthase (274 aa).

Lys111 (schiff-base intermediate with DXP) is an active-site residue. 1-deoxy-D-xylulose 5-phosphate-binding positions include Gly172, 198–199, and 220–221; these read AG and NS. Positions 251–274 are disordered; sequence RLPERAAASPSSPTTGIIAEAKTK.

The protein belongs to the ThiG family. In terms of assembly, homotetramer. Forms heterodimers with either ThiH or ThiS.

It localises to the cytoplasm. It catalyses the reaction [ThiS sulfur-carrier protein]-C-terminal-Gly-aminoethanethioate + 2-iminoacetate + 1-deoxy-D-xylulose 5-phosphate = [ThiS sulfur-carrier protein]-C-terminal Gly-Gly + 2-[(2R,5Z)-2-carboxy-4-methylthiazol-5(2H)-ylidene]ethyl phosphate + 2 H2O + H(+). The protein operates within cofactor biosynthesis; thiamine diphosphate biosynthesis. Catalyzes the rearrangement of 1-deoxy-D-xylulose 5-phosphate (DXP) to produce the thiazole phosphate moiety of thiamine. Sulfur is provided by the thiocarboxylate moiety of the carrier protein ThiS. In vitro, sulfur can be provided by H(2)S. This is Thiazole synthase from Prochlorococcus marinus (strain MIT 9313).